Consider the following 365-residue polypeptide: L-lactate oxidase (365 aa).

Residues 6 to 365 (RIPPGVWNAI…ITHDTLTPSC (360 aa)) form the FMN hydroxy acid dehydrogenase domain. Y32 serves as a coordination point for pyruvate. FMN-binding positions include 85–87 (PVA), S114, and Q135. Residue Y137 participates in pyruvate binding. Residues T163, K237, and S259 each coordinate FMN. Pyruvate contacts are provided by H261 and R264. H261 acts as the Proton acceptor in catalysis. Residues 292-296 (DGGVR) and R316 each bind FMN.

This sequence belongs to the FMN-dependent alpha-hydroxy acid dehydrogenase family. In terms of assembly, homotetramer. Requires FMN as cofactor.

The catalysed reaction is (S)-lactate + O2 = pyruvate + H2O2. The enzyme catalyses glycolate + O2 = glyoxylate + H2O2. Its function is as follows. Catalyzes the oxidation of (S)-lactate (L-lactate) to pyruvate, with a reduction of O2 to H2O2. To a lesser extent is also able to use glycolate as substrate. This chain is L-lactate oxidase, found in Alicycliphilus denitrificans (strain DSM 14773 / CIP 107495 / K601).